Here is a 1100-residue protein sequence, read N- to C-terminus: Sorbin and SH3 domain-containing protein 2 (1100 aa).

6 positions are modified to phosphoserine: Tyr13, Ser14, His27, Gly28, Ser30, and Ser43. Residues Ser30 to Ile52 show a composition bias toward polar residues. The interval Ser30–Ser57 is disordered. The SoHo domain occupies Val66–Gly127. The segment covering Ser134 to Arg147 has biased composition (polar residues). Positions Ser134–Asp311 are disordered. Position 153 is an alanine amide (His153). Phosphoserine is present on residues Ser154 and Ser157. Residues Pro167 to Leu180 show a composition bias toward pro residues. Over residues Arg181–Pro217 the composition is skewed to basic and acidic residues. Phosphothreonine occurs at positions 234 and 236. A phosphoserine mark is found at Ser239, Ser245, Ser248, Lys258, Ser259, and Glu260. Phosphothreonine is present on residues Thr277, Gly280, and Val282. Ser287 carries the post-translational modification Phosphoserine. A compositionally biased stretch (low complexity) spans Ser287–Ser304. Thr292 is modified (phosphothreonine). 10 positions are modified to phosphoserine: Phe295, Ser297, Ser298, Ser299, Ser301, Ser302, Ser304, Ala306, Asp311, and Pro316. A phosphothreonine mark is found at Ser320, Ser322, and Gly326. His341, Val344, and Arg346 each carry phosphoserine. Position 366 is a phosphothreonine (Glu366). Phosphoserine is present on residues Ser381 and Ser383. 2 positions are modified to phosphothreonine: Asp413 and Lys415. Phosphoserine is present on residues Arg437 and Arg439. Phosphothreonine is present on Ile459. 5 positions are modified to phosphoserine: Lys474, Ser494, Ser497, Ser550, and Ser750. A disordered region spans residues Arg807–Leu866. Polar residues predominate over residues Ala812–Cys824. Positions His825–Pro839 are enriched in basic and acidic residues. Ser843 carries the phosphoserine modification. The span at Ala853–Leu866 shows a compositional bias: basic and acidic residues. SH3 domains follow at residues Lys863–Pro922 and Gly938–Lys999. Ser1017 and Ser1023 each carry phosphoserine. Positions Gly1041–Leu1100 constitute an SH3 3 domain.

As to quaternary structure, interacts with ABL, CBL, DNM1, DNM2, FLOT1, AFDN, PTK2B/PYK2, SAPAP, SPTAN1, SYNJ1, SYNJ2, VCL/vinculin and WASF. Interacts with ABL1/c-Abl, ABL2/v-Abl/Arg, ACTN, CBL and PALLD. Interacts with PTPN12 and WASF1 via its SH3 domains; this interaction may mediate the partial PTPN12 and WASF1 translocation to focal adhesion sites. Post-translationally, ubiquitinated by CBL. Dephosphorylated by PTPN12. Abundantly expressed in heart. In cardiac muscle cells, located in the Z-disks of sarcomere. Also found, but to a lower extent, in small and large intestine, pancreas, thymus, colon, spleen, prostate, testis, brain, ovary and epithelial cells. In the pancreas, mainly expressed in acinar cells, duct cells and all cell types in islets (at protein level). Tends to be down-regulated in pancreatic adenocarcinomas ans metastases.

It localises to the cytoplasm. The protein localises to the perinuclear region. It is found in the apical cell membrane. Its subcellular location is the cell junction. The protein resides in the focal adhesion. It localises to the cell projection. The protein localises to the lamellipodium. Adapter protein that plays a role in the assembling of signaling complexes, being a link between ABL kinases and actin cytoskeleton. Can form complex with ABL1 and CBL, thus promoting ubiquitination and degradation of ABL1. May play a role in the regulation of pancreatic cell adhesion, possibly by acting on WASF1 phosphorylation, enhancing phosphorylation by ABL1, as well as dephosphorylation by PTPN12. Isoform 6 increases water and sodium absorption in the intestine and gall-bladder. In Homo sapiens (Human), this protein is Sorbin and SH3 domain-containing protein 2 (SORBS2).